A 489-amino-acid polypeptide reads, in one-letter code: Retinoblastoma-binding protein 5 homolog (489 aa).

6 WD repeats span residues 22–63 (DCIS…KIIS), 64–103 (AHVH…LEHK), 147–187 (DSDG…VVAS), 195–234 (SSAT…TLGK), 248–290 (VNKT…KILH), and 292–330 (TKGE…NWSA). The interval 451–489 (DVSLPDAPTDETHPLISSKASKDKQQPVGGKKAAGRTKK) is disordered.

Core component of several methyltransferase-containing complexes. Component of the SET1 complex, composed at least of the catalytic subunit Set1, wds/WDR5, Wdr82, Rbbp5, ash2, Cfp1/CXXC1, hcf and Dpy-30L1. Component of the MLL3/4 complex composed at least of the catalytic subunit trr, ash2, Rbbp5, Dpy-30L1, wds, hcf, ptip, Pa1, Utx, Lpt and Ncoa6.

The protein localises to the nucleus. Its function is as follows. Component of the SET1 complex that specifically di- and trimethylates 'Lys-4' of histone H3 and of the MLL3/4 complex which also methylates histone H3 'Lys-4'. This chain is Retinoblastoma-binding protein 5 homolog, found in Drosophila melanogaster (Fruit fly).